The following is a 163-amino-acid chain: Halocyanin (163 aa).

The N-terminal stretch at M1–G24 is a signal peptide. N-acetylcysteine is present on C25. Residue C25 is the site of S-archaeol cysteine attachment. A compositionally biased stretch (gly residues) spans N26 to N38. A disordered region spans residues N26–A48. The Plastocyanin-like domain occupies A48–E163. Residues H110, C148, H151, and M156 each coordinate Cu cation.

Its subcellular location is the cell membrane. In terms of biological role, electron donor. Binds one copper ion. This chain is Halocyanin (hcy), found in Natronomonas pharaonis (Natronobacterium pharaonis).